Here is a 157-residue protein sequence, read N- to C-terminus: MKKITSFTIDHTKLNPGIYVSRKDTFENVIFTTIDIRIKAPNIEPIIENAAIHTIEHIGATLLRNNEVWTEKIVYFGPMGCRTGFYLIIFGNYESKDLIDLISWLFSEIVNFSEPIPGASHKECGNYKDHNLDMAKYESSKYLQILNNIKEENLKYP.

Fe cation is bound by residues His53, His57, and Cys124.

It belongs to the LuxS family. Homodimer. The cofactor is Fe cation.

The catalysed reaction is S-(5-deoxy-D-ribos-5-yl)-L-homocysteine = (S)-4,5-dihydroxypentane-2,3-dione + L-homocysteine. Involved in the synthesis of autoinducer 2 (AI-2) which is secreted by bacteria and is used to communicate both the cell density and the metabolic potential of the environment. The regulation of gene expression in response to changes in cell density is called quorum sensing. Catalyzes the transformation of S-ribosylhomocysteine (RHC) to homocysteine (HC) and 4,5-dihydroxy-2,3-pentadione (DPD). This chain is S-ribosylhomocysteine lyase, found in Borrelia garinii subsp. bavariensis (strain ATCC BAA-2496 / DSM 23469 / PBi) (Borreliella bavariensis).